A 518-amino-acid chain; its full sequence is MKYKDLRDFIQRLEALGELRRVTQPVSPVLEMTELCDRVLRAGGPALLFNAPPGNAFPVLGNLFGTPRRVALGMGVDAGDDAALGSLRDLGRLLSALKEPDPPKSLKDAGKLLSLAKAVWDMAPKSVSSPPCQEIVWEGADVDLNKLPIQTCWPGDAGPLVTWGLTVTRGPNKSRQNLGIYRQQLIGRNKLIMRWLAHRGGALDFREFALQNPGKPYPVAVVLGADPATTLGAVTPVPDSLSEYQFAGLLRGSRTELAKCLTPGVDTLQVPARAEIVLEGFIHPQEGAPAPAPAGAPPRPAGNAAAAYEHALEGPYGDHTGYYNEQEWFPVFTVERITMRRDAIYHSTYTGKPPDEPAVLGVALNEVFVPLLQKQFTEITDFYLPPEGCSYRMAIVQMKKSYAGHAKRVMFGVWSFLRQFMYTKFIVVVDEDVNIRDWKEVIWAITTRVDPVRDTVMVDSTPIDYLDFASPVAGLGSKMGLDATNKWPGETSREWGRPIEMDAAVKARVDRLWQEIGL.

Residue asparagine 177 coordinates Mn(2+). Residues 180–182 (IYR), 194–196 (RWL), and 199–200 (RG) each bind prenylated FMN. Glutamate 243 serves as a coordination point for Mn(2+). Aspartate 318 serves as the catalytic Proton donor.

It belongs to the UbiD family. As to quaternary structure, homohexamer. Prenylated FMN serves as cofactor. The cofactor is Mn(2+).

The protein resides in the cell membrane. The enzyme catalyses a 4-hydroxy-3-(all-trans-polyprenyl)benzoate + H(+) = a 2-(all-trans-polyprenyl)phenol + CO2. It functions in the pathway cofactor biosynthesis; ubiquinone biosynthesis. In terms of biological role, catalyzes the decarboxylation of 3-octaprenyl-4-hydroxy benzoate to 2-octaprenylphenol, an intermediate step in ubiquinone biosynthesis. The chain is 3-octaprenyl-4-hydroxybenzoate carboxy-lyase from Burkholderia orbicola (strain AU 1054).